We begin with the raw amino-acid sequence, 181 residues long: Ribulose bisphosphate carboxylase small subunit, chloroplastic 6 (181 aa).

Residues Met1–Arg57 constitute a chloroplast transit peptide.

It belongs to the RuBisCO small chain family. As to quaternary structure, heterohexadecamer of 8 large and 8 small subunits.

Its subcellular location is the plastid. It is found in the chloroplast. RuBisCO catalyzes two reactions: the carboxylation of D-ribulose 1,5-bisphosphate, the primary event in carbon dioxide fixation, as well as the oxidative fragmentation of the pentose substrate. Both reactions occur simultaneously and in competition at the same active site. Although the small subunit is not catalytic it is essential for maximal activity. The chain is Ribulose bisphosphate carboxylase small subunit, chloroplastic 6 from Solanum tuberosum (Potato).